We begin with the raw amino-acid sequence, 149 residues long: Large ribosomal subunit protein eL19 (149 aa).

Residues 55 to 69 (KGISSARKKEVQEQK) are compositionally biased toward basic and acidic residues. The disordered stretch occupies residues 55 to 93 (KGISSARKKEVQEQKRKGKRKGPGSRRGAKGARTPKKEK). The segment covering 70–88 (RKGKRKGPGSRRGAKGART) has biased composition (basic residues).

This sequence belongs to the eukaryotic ribosomal protein eL19 family. In terms of assembly, part of the 50S ribosomal subunit.

Its function is as follows. Binds to the 23S rRNA. This is Large ribosomal subunit protein eL19 from Methanococcus vannielii.